Reading from the N-terminus, the 518-residue chain is Maturase K (518 aa).

It belongs to the intron maturase 2 family. MatK subfamily.

The protein resides in the plastid. It is found in the chloroplast. In terms of biological role, usually encoded in the trnK tRNA gene intron. Probably assists in splicing its own and other chloroplast group II introns. This Syzygium cumini (Java plum) protein is Maturase K.